We begin with the raw amino-acid sequence, 156 residues long: Putative pre-16S rRNA nuclease (156 aa).

This sequence belongs to the YqgF nuclease family.

It is found in the cytoplasm. In terms of biological role, could be a nuclease involved in processing of the 5'-end of pre-16S rRNA. This is Putative pre-16S rRNA nuclease from Streptomyces avermitilis (strain ATCC 31267 / DSM 46492 / JCM 5070 / NBRC 14893 / NCIMB 12804 / NRRL 8165 / MA-4680).